We begin with the raw amino-acid sequence, 284 residues long: Pantothenate synthetase (284 aa).

30-37 is an ATP binding site; that stretch reads MGNLHDGH. The active-site Proton donor is H37. Q61 is a (R)-pantoate binding site. Residue Q61 participates in beta-alanine binding. Position 149-152 (149-152) interacts with ATP; that stretch reads GEKD. Residue Q155 coordinates (R)-pantoate. Residues I178 and 186–189 each bind ATP; that span reads LSSR.

It belongs to the pantothenate synthetase family. In terms of assembly, homodimer.

It is found in the cytoplasm. It carries out the reaction (R)-pantoate + beta-alanine + ATP = (R)-pantothenate + AMP + diphosphate + H(+). It functions in the pathway cofactor biosynthesis; (R)-pantothenate biosynthesis; (R)-pantothenate from (R)-pantoate and beta-alanine: step 1/1. Functionally, catalyzes the condensation of pantoate with beta-alanine in an ATP-dependent reaction via a pantoyl-adenylate intermediate. The protein is Pantothenate synthetase of Salmonella newport (strain SL254).